Consider the following 417-residue polypeptide: Protein FAM181B (417 aa).

Positions 104–147 (CSGLMGTAPPRPASPSAADAPAKRPPGAPTVATPAHCKAAPRRE) are disordered.

This sequence belongs to the FAM181 family.

The chain is Protein FAM181B (Fam181b) from Mus musculus (Mouse).